The primary structure comprises 120 residues: uncharacterized protein (120 aa).

Its subcellular location is the cytoplasm. It localises to the nucleus. This is an uncharacterized protein from Schizosaccharomyces pombe (strain 972 / ATCC 24843) (Fission yeast).